The chain runs to 178 residues: Ribosome maturation factor RimM (178 aa).

In terms of domain architecture, PRC barrel spans 100-178 (AADEYYWYQL…VMRVEWDADF (79 aa)).

It belongs to the RimM family. As to quaternary structure, binds ribosomal protein uS19.

The protein localises to the cytoplasm. Functionally, an accessory protein needed during the final step in the assembly of 30S ribosomal subunit, possibly for assembly of the head region. Essential for efficient processing of 16S rRNA. May be needed both before and after RbfA during the maturation of 16S rRNA. It has affinity for free ribosomal 30S subunits but not for 70S ribosomes. This chain is Ribosome maturation factor RimM, found in Pseudomonas putida (strain W619).